We begin with the raw amino-acid sequence, 140 residues long: Ribonuclease P protein subunit p20 (140 aa).

Belongs to the histone-like Alba family. Component of nuclear RNase P and RNase MRP complexes. RNase P consists of a catalytic RNA moiety and 10 different protein chains; POP1, POP4, POP5, POP7, RPP14, RPP21, RPP25, RPP30, RPP38 and RPP40. Within the RNase P complex, POP1, POP7 and RPP25 form the 'finger' subcomplex, POP5, RPP14, RPP40 and homodimeric RPP30 form the 'palm' subcomplex, and RPP21, POP4 and RPP38 form the 'wrist' subcomplex. All subunits of the RNase P complex interact with the catalytic RNA. Several subunits of RNase P are also part of the RNase MRP complex. RNase MRP consists of a catalytic RNA moiety and about 8 protein subunits; POP1, POP7, RPP25, RPP30, RPP38, RPP40 and possibly also POP4 and POP5. Interacts with SMN1. POP7 forms a heterodimer with RPP25 that binds to the P3 stem loop of the catalytic RNA.

It is found in the nucleus. It localises to the nucleolus. Its subcellular location is the cytoplasm. The protein resides in the cytoplasmic granule. Its function is as follows. Component of ribonuclease P, a ribonucleoprotein complex that generates mature tRNA molecules by cleaving their 5'-ends. Also a component of the MRP ribonuclease complex, which cleaves pre-rRNA sequences. The protein is Ribonuclease P protein subunit p20 (POP7) of Homo sapiens (Human).